The chain runs to 133 residues: MINDDSFTLKRKYQIDSAESTMKMDKTMTKFQNRVKMVKEINQTIRAAQTHYETLKLGYIKFKGMIRTTTLEDIAPSIPNNQKTYKLFSDISVIGKASQNPSKMIYARCFTCFPICLEMTIDSFVIECIQHCS.

It belongs to the orthopoxvirus OPG067 family.

Its subcellular location is the host cytoplasm. Its function is as follows. Major early protein present in virus factories. The presence of BEN domains suggests a possible role in organization of viral DNA during replication or transcription. This Monkeypox virus protein is Protein OPG067 (OPG067).